We begin with the raw amino-acid sequence, 562 residues long: Potassium-transporting ATPase potassium-binding subunit (562 aa).

12 consecutive transmembrane segments (helical) span residues 5 to 25, 63 to 83, 132 to 152, 175 to 195, 250 to 270, 279 to 299, 327 to 347, 356 to 376, 379 to 399, 416 to 436, 483 to 503, and 526 to 546; these read AFLL…PLGS, AAAI…LLMA, GLTV…FALI, LYVL…QGVL, LSNI…CFAF, QGHA…AVVM, FGVL…TGAV, ALGG…FGGV, GLYG…LMIG, MTAL…ALAL, VLLA…VLAI, and LFIG…FIPA.

It belongs to the KdpA family. The system is composed of three essential subunits: KdpA, KdpB and KdpC.

The protein resides in the cell inner membrane. Functionally, part of the high-affinity ATP-driven potassium transport (or Kdp) system, which catalyzes the hydrolysis of ATP coupled with the electrogenic transport of potassium into the cytoplasm. This subunit binds the periplasmic potassium ions and delivers the ions to the membrane domain of KdpB through an intramembrane tunnel. The protein is Potassium-transporting ATPase potassium-binding subunit of Pectobacterium carotovorum subsp. carotovorum (strain PC1).